The primary structure comprises 348 residues: Dihydroorotase (348 aa).

Zn(2+) is bound by residues H17 and H19. Substrate contacts are provided by residues 19–21 (HLR) and N45. Zn(2+) contacts are provided by K103, H140, and H178. The residue at position 103 (K103) is an N6-carboxylysine. H140 is a substrate binding site. Substrate is bound at residue L223. A Zn(2+)-binding site is contributed by D251. D251 is an active-site residue. Substrate is bound by residues H255 and A267.

This sequence belongs to the metallo-dependent hydrolases superfamily. DHOase family. Class II DHOase subfamily. As to quaternary structure, homodimer. Zn(2+) serves as cofactor.

The enzyme catalyses (S)-dihydroorotate + H2O = N-carbamoyl-L-aspartate + H(+). Its pathway is pyrimidine metabolism; UMP biosynthesis via de novo pathway; (S)-dihydroorotate from bicarbonate: step 3/3. Its function is as follows. Catalyzes the reversible cyclization of carbamoyl aspartate to dihydroorotate. This chain is Dihydroorotase, found in Escherichia coli O7:K1 (strain IAI39 / ExPEC).